A 107-amino-acid polypeptide reads, in one-letter code: MSESSSKSSQPLASKQEKDGTEKRGRGRPRKQPPVSPGTALVGSQKEPSEVPTPKRPRGRPKGSKNKGAAKTRKTTTTPGRKPRGRPKKLEKEEEEGISQESSEEEQ.

The interval 1–107 (MSESSSKSSQ…ISQESSEEEQ (107 aa)) is disordered. At S2 the chain carries N-acetylserine. K7 carries the post-translational modification N6-acetyllysine. The residue at position 8 (S8) is an ADP-ribosylserine. S9 carries the ADP-ribosylserine; alternate modification. A Phosphoserine; alternate modification is found at S9. Position 15 is an N6-acetyllysine; alternate (K15). K15 is covalently cross-linked (Glycyl lysine isopeptide (Lys-Gly) (interchain with G-Cter in SUMO2); alternate). The span at 15-24 (KQEKDGTEKR) shows a compositional bias: basic and acidic residues. The a.T hook 1 DNA-binding region spans 21 to 31 (TEKRGRGRPRK). R26 is modified (asymmetric dimethylarginine; alternate). R26 is subject to Omega-N-methylarginine; alternate. A Symmetric dimethylarginine; alternate modification is found at R26. Position 36 is a phosphoserine; by HIPK2 and CDC2 (S36). Phosphothreonine occurs at positions 39 and 42. A phosphoserine mark is found at S44 and S49. T53 bears the Phosphothreonine; by HIPK2 and CDC2 mark. Positions 53–63 (TPKRPRGRPKG) form a DNA-binding region, a.T hook 2. The interval 53-77 (TPKRPRGRPKGSKNKGAAKTRKTTT) is interaction with HIPK2. The span at 55-74 (KRPRGRPKGSKNKGAAKTRK) shows a compositional bias: basic residues. Residues R58 and R60 each carry the asymmetric dimethylarginine; by PRMT6; alternate modification. R58 and R60 each carry omega-N-methylarginine; by PRMT6; alternate. K67 carries the post-translational modification Phosphothreonine. Residue T78 is modified to Phosphothreonine; by HIPK2 and CDC2. A DNA-binding region (a.T hook 3) is located at residues 78–89 (TPGRKPRGRPKK). Acidic residues predominate over residues 93–107 (EEEEGISQESSEEEQ). Phosphoserine is present on S99. S102 and S103 each carry phosphoserine; by CK.

Belongs to the HMGA family. Interacts with HIPK2. Post-translationally, constitutively phosphorylated on two or three sites. Hyperphosphorylated at early stages of apoptosis, followed by dephosphorylation and methylation, which coincides with chromatin condensation. Isoforms HMG-I and HMG-Y can be phosphorylated by HIPK2. Phosphorylation of HMG-I at Ser-36, Thr-53 and Thr-78 and of HMG-Y at Thr-42 and Thr-67 by HIPK2 modulates DNA-binding affinity. HMG-Y is not methylated. In terms of processing, methylation at Arg-58 is mutually exclusive with methylation at Arg-60.

It localises to the nucleus. It is found in the chromosome. In terms of biological role, HMG-I/Y bind preferentially to the minor groove of A+T rich regions in double-stranded DNA. It is suggested that these proteins could function in nucleosome phasing and in the 3'-end processing of mRNA transcripts. They are also involved in the transcription regulation of genes containing, or in close proximity to A+T-rich regions. The protein is High mobility group protein HMG-I/HMG-Y (HMGA1) of Homo sapiens (Human).